The primary structure comprises 408 residues: DNA replication and repair protein RecF (408 aa).

30-37 (GSNGQGKT) contributes to the ATP binding site. Disordered stretches follow at residues 220–252 (DHGPSARPELSILADDPGEDDVADETGARDGGR) and 389–408 (SPTPASASEPASPGEDGGAA). Low complexity predominate over residues 389–402 (SPTPASASEPASPG).

This sequence belongs to the RecF family.

The protein resides in the cytoplasm. Its function is as follows. The RecF protein is involved in DNA metabolism; it is required for DNA replication and normal SOS inducibility. RecF binds preferentially to single-stranded, linear DNA. It also seems to bind ATP. The sequence is that of DNA replication and repair protein RecF from Clavibacter sepedonicus (Clavibacter michiganensis subsp. sepedonicus).